Consider the following 611-residue polypeptide: Fatty acid photodecarboxylase, chloroplastic (611 aa).

The segment at 1–22 (MMLGPKTVTRGATKGAAPRSMA) is disordered. A chloroplast-targeting transit peptide spans 1–36 (MMLGPKTVTRGATKGAAPRSMAARRVGGARRLSVRA). FAD contacts are provided by residues 55–56 (TA), Glu-76, Met-125, Ser-129, and 133–136 (NATL). Hexadecanoate contacts are provided by Cys-392, Arg-412, Tyr-427, and Gln-447. Gly-582 is an FAD binding site.

Belongs to the GMC oxidoreductase family. FAD is required as a cofactor.

It is found in the plastid. The protein resides in the chloroplast. The catalysed reaction is a long-chain fatty acid + hnu + H(+) = a long-chain alkane + CO2. It carries out the reaction hnu + hexadecanoate + H(+) = pentadecane + CO2. With respect to regulation, activated by blue light and repressed by red light. Its function is as follows. Catalyzes the decarboxylation of free fatty acids to n-alkanes or n-alkenes in response to blue light. Substrate preference is toward fatty acids with C17 or C18 chains. Saturated fatty acids are converted to alkanes, not alkenes. The decarboxylation is initiated through electron abstraction from the fatty acid by the photo-excited FAD. The chain is Fatty acid photodecarboxylase, chloroplastic from Chlamydomonas reinhardtii (Chlamydomonas smithii).